Reading from the N-terminus, the 427-residue chain is 3-phosphoshikimate 1-carboxyvinyltransferase (427 aa).

3 residues coordinate 3-phosphoshikimate: Lys-20, Ser-21, and Arg-25. A phosphoenolpyruvate-binding site is contributed by Lys-20. Residues Gly-92 and Arg-120 each coordinate phosphoenolpyruvate. Ser-166, Gln-168, Asp-312, and Lys-339 together coordinate 3-phosphoshikimate. Gln-168 is a phosphoenolpyruvate binding site. Asp-312 serves as the catalytic Proton acceptor. The phosphoenolpyruvate site is built by Arg-343 and Arg-385.

This sequence belongs to the EPSP synthase family. In terms of assembly, monomer.

The protein resides in the cytoplasm. It carries out the reaction 3-phosphoshikimate + phosphoenolpyruvate = 5-O-(1-carboxyvinyl)-3-phosphoshikimate + phosphate. Its pathway is metabolic intermediate biosynthesis; chorismate biosynthesis; chorismate from D-erythrose 4-phosphate and phosphoenolpyruvate: step 6/7. Catalyzes the transfer of the enolpyruvyl moiety of phosphoenolpyruvate (PEP) to the 5-hydroxyl of shikimate-3-phosphate (S3P) to produce enolpyruvyl shikimate-3-phosphate and inorganic phosphate. In Streptococcus equi subsp. equi (strain 4047), this protein is 3-phosphoshikimate 1-carboxyvinyltransferase.